We begin with the raw amino-acid sequence, 504 residues long: Endosomal/lysosomal proton channel TMEM175 (504 aa).

The interval 1 to 27 is disordered; it reads MSQPRTPEQALDTPGDCPPGRRDEDAG. Over 1-33 the chain is Cytoplasmic; sequence MSQPRTPEQALDTPGDCPPGRRDEDAGEGIQCS. Threonine 6 is subject to Phosphothreonine. The helical transmembrane segment at 34–56 threads the bilayer; sequence QRMLSFSDALLSIIATVMILPVT. Positions 35–41 match the RxxxFSD motif 1 motif; sequence RMLSFSD. The Lumenal portion of the chain corresponds to 57-77; sequence HTEISPEQQFDRSVQRLLATR. The segment at 58–63 is short helix H1-1; that stretch reads TEISPE. Residues 65–71 form a short helix H2-1 region; it reads QFDRSVQ. Residues 78–100 traverse the membrane as a helical segment; sequence IAVYLMTFLIVTVAWAAHTRLFQ. At 101–106 the chain is on the cytoplasmic side; sequence VVGKTD. The chain crosses the membrane as a helical span at residues 107-128; it reads DTLALLNLACMMTITFLPYTFS. Residues 129 to 138 lie on the Lumenal side of the membrane; it reads LMVTFPDVPL. The chain crosses the membrane as a helical span at residues 139–160; sequence GIFLFCVCVIAIGVVQALIVGY. Topologically, residues 161-184 are cytoplasmic; that stretch reads AFHFPHLLSPQIQRSAHRALYRRH. The helical transmembrane segment at 185-205 threads the bilayer; that stretch reads VLGIVLQGPALCFAAAIFSLF. Topologically, residues 206–210 are lumenal; it reads FVPLS. Residues 211-230 form a helical membrane-spanning segment; sequence YLLMVTVILLPYVSKVTGWC. Over 231-257 the chain is Cytoplasmic; the sequence is RDRLLGHREPSAHPVEVFSFDLHEPLS. A helical transmembrane segment spans residues 258-282; it reads KERVEAFSDGVYAIVATLLILDICE. The RxxxFSD motif 2 signature appears at 260 to 266; sequence RVEAFSD. At 283–309 the chain is on the lumenal side; that stretch reads DNVPDPKDVKERFSGSLVAALSATGPR. The short helix H1-2 stretch occupies residues 288–296; it reads PKDVKERFS. A short helix H2-2 region spans residues 298–304; the sequence is SLVAALS. The chain crosses the membrane as a helical span at residues 310–332; sequence FLAYFGSFATVGLLWFAHHSLFL. Over 333–338 the chain is Cytoplasmic; sequence HVRKAT. Residues 339–360 form a helical membrane-spanning segment; that stretch reads RAMGLLNTLSLAFVGGLPLAYQ. The Lumenal segment spans residues 361–375; sequence QTSAFARQPRDELER. A helical membrane pass occupies residues 376–396; it reads VRVSCTIIFLASIFQLAMWTT. At 397-416 the chain is on the cytoplasmic side; that stretch reads ALLHQAETLQPSVWFGGREH. The chain crosses the membrane as a helical span at residues 417 to 440; sequence VLMFAKLALYPCASLLAFASTCLL. The Lumenal segment spans residues 441–442; that stretch reads SR. A helical membrane pass occupies residues 443–469; the sequence is FSVGIFHLMQIAVPCAFLLLRLLVGLA. Topologically, residues 470-504 are cytoplasmic; the sequence is LATLRVLRGLARPEHPPPAPTGQDDPQSQLLPAPC. The tract at residues 483–504 is disordered; the sequence is EHPPPAPTGQDDPQSQLLPAPC. Residues 493 to 504 show a composition bias toward polar residues; the sequence is DDPQSQLLPAPC.

The protein belongs to the TMEM175 family. As to quaternary structure, homodimer. Interacts with AKT (AKT1, AKT2 or AKT3); leading to formation of the lysoK(GF) complex, which activates the channel. Interacts with LAMP1; inhibiting the proton channel activity of TMEM175. Interacts with LAMP2; inhibiting the proton channel activity of TMEM175. Widely expressed.

It is found in the endosome membrane. It localises to the lysosome membrane. The catalysed reaction is H(+)(in) = H(+)(out). It catalyses the reaction K(+)(in) = K(+)(out). Active at low pH (under pH 4.6): proton channel activity is activated by luminal side protons. Polyunsaturated fatty acids, such as arachidonic acid, also activate the channel activity. Proton channel activity is directly inhibited by LAMP1 or LAMP2, facilitating lysosomal acidification. Channel activity is activated following interaction with AKT (AKT1, AKT2 or AKT3): interaction promotes activation from closed to an open state. Activation by AKT is independent of AKT serine/threonine-protein kinase activity. In terms of biological role, proton-activated proton channel that catalyzes proton efflux from endosomes and lysosomes to maintain a steady-state pH. Activated at low pH (under pH 4.6) by luminal side protons: selectively mediates lysosomal proton release from lysosomes, eliciting a proton leak that balances V-ATPase activity to maintain pH homeostasis. Regulation of lumenal pH stability is required for autophagosome-lysosome fusion. Also acts as a potassium channel at higher pH, regulating potassium conductance in endosomes and lysosomes. Constitutes the pore-forming subunit of the lysoK(GF) complex, a complex activated by extracellular growth factors. The lysoK(GF) complex is composed of TMEM175 and AKT (AKT1, AKT2 or AKT3), a major target of growth factor receptors: in the complex, TMEM175 channel is opened by conformational changes by AKT, leading to its activation. The lysoK(GF) complex is required to protect neurons against stress-induced damage. In Homo sapiens (Human), this protein is Endosomal/lysosomal proton channel TMEM175.